The primary structure comprises 283 residues: Non-selective voltage-gated ion channel VDAC3 (283 aa).

Cysteine 2 carries the N-acetylcysteine modification. Threonine 4 is modified (phosphothreonine). An N6-acetyllysine mark is found at lysine 12, lysine 15, and lysine 20. The next 2 membrane-spanning stretches (beta stranded) occupy residues 26 to 35 (MVKIDLRTKS) and 39 to 47 (VEFSTSGHA). Lysine 53 participates in a covalent cross-link: Glycyl lysine isopeptide (Lys-Gly) (interchain with G-Cter in ubiquitin). 3 beta stranded membrane passes run 54-64 (ASGNLETKYKV), 69-76 (LTFTQKWN), and 80-89 (TLGTEISLEN). At lysine 90 the chain carries N6-acetyllysine. Residues 95–104 (LKLTLDTIFV) traverse the membrane as a beta stranded segment. Residues lysine 109 and lysine 110 each participate in a glycyl lysine isopeptide (Lys-Gly) (interchain with G-Cter in ubiquitin) cross-link. 10 beta stranded membrane-spanning segments follow: residues 111–120 (SGKLKASYKR), 123–130 (FSLGSNVD), 137–145 (TIYGWAVLA), 150–158 (LAGYQMSFD), 163–175 (KLSQ…GYKA), 178–185 (FQLHTHVN), 189–198 (EFGGSIYQKV), 202–211 (IETSINLAWT), 218–227 (RFGIAAKYKL), and 231–238 (TSLSAKVN). Residue serine 241 is modified to Phosphoserine. NAD(+) is bound by residues 242 to 244 (LIG) and 260 to 264 (SALID). 2 consecutive transmembrane segments (beta stranded) span residues 242–251 (LIGLGYTQTL) and 254–263 (GVKLTLSALI). Lysine 266 carries the N6-acetyllysine; alternate modification. Residue lysine 266 forms a Glycyl lysine isopeptide (Lys-Gly) (interchain with G-Cter in ubiquitin); alternate linkage. The chain crosses the membrane as a beta stranded span at residues 273–282 (HKVGLGFELE).

The protein belongs to the eukaryotic mitochondrial porin family. In terms of assembly, interacts with ARMC12 in a TBC1D21-dependent manner. Interacts with MISFA. In terms of processing, ubiquitinated by PRKN during mitophagy, leading to its degradation and enhancement of mitophagy. Deubiquitinated by USP30.

The protein resides in the mitochondrion outer membrane. It localises to the membrane. It carries out the reaction chloride(in) = chloride(out). It catalyses the reaction K(+)(in) = K(+)(out). Its function is as follows. Non-selective voltage-gated ion channel that mediates the transport of anions and cations through the mitochondrion outer membrane and plasma membrane. Forms a high-conducting channel with a stable open state and a voltage-induced closure with a mild preference for anions over cations. Involved in male fertility and sperm mitochondrial sheath formation. This chain is Non-selective voltage-gated ion channel VDAC3, found in Oryctolagus cuniculus (Rabbit).